The following is a 476-amino-acid chain: FAD-dependent monooxygenase dpasE (476 aa).

The N-terminal stretch at 1-21 is a signal peptide; it reads MSQPAFKIIIVGCSVTGLTLA. Positions 35, 49, and 109 each coordinate FAD. Residues N190 and N219 are each glycosylated (N-linked (GlcNAc...) asparagine). FAD is bound by residues D308 and A321. Residues 441–461 form a helical membrane-spanning segment; it reads GAGFWITAFLSLSLLAVAATM.

Belongs to the paxM FAD-dependent monooxygenase family. Requires FAD as cofactor.

Its subcellular location is the membrane. Its pathway is secondary metabolite biosynthesis; terpenoid biosynthesis. Functionally, FAD-dependent monooxygenase; part of the gene cluster that mediates the biosynthesis of the diterpenoid pyrones subglutinols A and B. The first step of the pathway is the synthesis of the alpha-pyrone moiety by the polyketide synthase dpasA via condensation of one acetyl-CoA starter unit with 3 malonyl-CoA units and 2 methylations. The alpha-pyrone is then combined with geranylgeranyl pyrophosphate (GGPP) formed by the GGPP synthase dpasD through the action of the prenyltransferase dpasC to yield a linear alpha-pyrone diterpenoid. Subsequent steps in the diterpenoid pyrone biosynthetic pathway involve the decalin core formation, which is initiated by the epoxidation of the C10-C11 olefin by the FAD-dependent oxidoreductase dpasE, and is followed by a cyclization cascade catalyzed by the terpene cyclase dpasB. The FAD-linked oxidoreductase dpasF is then involved in tetrahydrofuran (THF) ring formation at the C5 unit to complete the formation of subglutinols A and B. DpasF possesses also an additional catalytic ability of multi-step oxidations to generate a new DDP analog with an enone system at the C5 named FDDP A. The chain is FAD-dependent monooxygenase dpasE from Apiospora sacchari (Arthrinium sacchari).